The sequence spans 293 residues: Energy-coupling factor transporter ATP-binding protein EcfA2 (293 aa).

The ABC transporter domain occupies 3 to 246 (ITFQKVEHRY…ADELEKIGVD (244 aa)). 40-47 (GHTGSGKS) is a binding site for ATP.

This sequence belongs to the ABC transporter superfamily. Energy-coupling factor EcfA family. Forms a stable energy-coupling factor (ECF) transporter complex composed of 2 membrane-embedded substrate-binding proteins (S component), 2 ATP-binding proteins (A component) and 2 transmembrane proteins (T component).

The protein resides in the cell membrane. ATP-binding (A) component of a common energy-coupling factor (ECF) ABC-transporter complex. Unlike classic ABC transporters this ECF transporter provides the energy necessary to transport a number of different substrates. This is Energy-coupling factor transporter ATP-binding protein EcfA2 from Bacillus thuringiensis (strain Al Hakam).